The chain runs to 84 residues: Defensin-like protein 37 (84 aa).

The signal sequence occupies residues 1–24 (MAVKLIYLFLFLYIALLISGRTMS). Disulfide bonds link Cys46-Cys67, Cys52-Cys79, and Cys56-Cys81.

Belongs to the DEFL family.

It is found in the secreted. The chain is Defensin-like protein 37 (EDA21) from Arabidopsis thaliana (Mouse-ear cress).